The primary structure comprises 326 residues: tRNA-modifying protein YgfZ (326 aa).

Folate contacts are provided by Trp27 and Trp189.

Belongs to the tRNA-modifying YgfZ family.

Its subcellular location is the cytoplasm. Its function is as follows. Folate-binding protein involved in regulating the level of ATP-DnaA and in the modification of some tRNAs. It is probably a key factor in regulatory networks that act via tRNA modification, such as initiation of chromosomal replication. In Shigella sonnei (strain Ss046), this protein is tRNA-modifying protein YgfZ.